The sequence spans 500 residues: MPVDLDNSSTVSGDASVSSTGNQNLTPKSVGKKKRNLPGMPDPDAEVIALSPKTLMATNRFVCEICNKGFQRDQNLQLHRRGHNLPWKLRQRSTKEVRKKVYVCPVSGCVHHDPSRALGDLTGIKKHFCRKHGEKKWKCEKCSKKYAVQSDWKAHSKICGTKEYKCDCGTLFSRRDSFITHRAFCDALAEESAKNHTQSKKLYPETVTRKNPEIEQKSPAAVESSPSLPPSSPPSVAIAPAPAISVETESVKIISSSVLPIQNSPESQENNNHPEVIIEEASRTIGFNVSSSDLSNDHSNNNGGYAGLFVSSTASPSLYASSTASPSLFAPSSSMEPISLCLSTNPSLFGPTIRDPPHFLTPLPPQPAMSATALLQKAAQMGSTGSGGSLLRGLGIVSTTSSSMELSNHDALSLAPGLGLGLPCSSGGSGSGLKELMMGNSSVFGPKQTTLDFLGLGRAVGNGGNTGGGLSALLTSIGGGGGIDLFGSGEFSGKDIGRSS.

The segment at 1-42 (MPVDLDNSSTVSGDASVSSTGNQNLTPKSVGKKKRNLPGMPD) is disordered. Residues 8–21 (SSTVSGDASVSSTG) are compositionally biased toward low complexity. Phosphoserine is present on Ser-51. C2H2-type zinc fingers lie at residues 61–83 (FVCE…RRGH) and 102–132 (YVCP…CRKH). The short motif at 124-131 (IKKHFCRK) is the Nuclear localization signal element. The C2H2-type 2; degenerate zinc-finger motif lies at 137-160 (WKCEKCSKKYAVQSDWKAHSKICG). Zn(2+) contacts are provided by Cys-139, Cys-142, His-155, Cys-159, Cys-166, Cys-168, His-181, and Cys-185. The CCHC-type 2; atypical zinc-finger motif lies at 164–187 (YKCDCGTLFSRRDSFITHRAFCDA). The interval 174-186 (RRDSFITHRAFCD) is SHR-binding. A disordered region spans residues 196–236 (HTQSKKLYPETVTRKNPEIEQKSPAAVESSPSLPPSSPPSV). Residues 207 to 216 (VTRKNPEIEQ) show a composition bias toward basic and acidic residues.

As to quaternary structure, interacts with the DELLA proteins (e.g. GAI/RGA2, RGA, RGL1, RGL2 and RGLG3), acting as coactivators. At 3 days post anthesis (DPA), expressed in the chalazal endosperm region. By 6 DPA, expressed in the endosperm and embryo. In fully germinated seed, strongest expression in the root tip and not detected in the cotyledons. In 4-days old seedlings, restricted to the vasculature of the cotyledons, the shoot apical meristem region, and the root tip. By 8 days, restricted to newly emerged leaves.

It localises to the nucleus. Transcription factor promoting the transition to germination by regulating light and hormonal signaling during seed maturation. Acts as a positive regulator of phytochrome and/or gibberellin action. In Arabidopsis thaliana (Mouse-ear cress), this protein is Zinc finger protein ENHYDROUS.